We begin with the raw amino-acid sequence, 540 residues long: Phosphoenolpyruvate carboxykinase (ATP) (540 aa).

Arginine 65 serves as a coordination point for substrate. The residue at position 87 (lysine 87) is an N6-acetyllysine. Substrate is bound by residues tyrosine 207 and lysine 213. Residues lysine 213, histidine 232, and 248 to 256 (GLSGTGKTT) each bind ATP. Residues lysine 213 and histidine 232 each contribute to the Mn(2+) site. Aspartate 269 is a Mn(2+) binding site. Residues glutamate 297, arginine 333, 449–450 (RI), and threonine 455 each bind ATP. Residue arginine 333 participates in substrate binding. Residue lysine 523 is modified to N6-acetyllysine.

It belongs to the phosphoenolpyruvate carboxykinase (ATP) family. As to quaternary structure, monomer. It depends on Mn(2+) as a cofactor.

Its subcellular location is the cytoplasm. The enzyme catalyses oxaloacetate + ATP = phosphoenolpyruvate + ADP + CO2. Its pathway is carbohydrate biosynthesis; gluconeogenesis. In terms of biological role, involved in the gluconeogenesis. Catalyzes the conversion of oxaloacetate (OAA) to phosphoenolpyruvate (PEP) through direct phosphoryl transfer between the nucleoside triphosphate and OAA. In Shigella flexneri, this protein is Phosphoenolpyruvate carboxykinase (ATP).